The primary structure comprises 79 residues: Biotin synthase auxiliary protein (79 aa).

Belongs to the BsaP family. Requires iron-sulfur cluster as cofactor.

Its function is as follows. Required for the activity of the biotin synthase BioB. The polypeptide is Biotin synthase auxiliary protein (Mycobacterium bovis (strain ATCC BAA-935 / AF2122/97)).